Reading from the N-terminus, the 739-residue chain is Probable beta-glucosidase L (739 aa).

The signal sequence occupies residues 1 to 17 (MQTLFLSLLAAAVTVHA). Residues Asn40 and Asn224 are each glycosylated (N-linked (GlcNAc...) asparagine). Residue Asp252 is part of the active site. An N-linked (GlcNAc...) asparagine glycan is attached at Asn398.

Belongs to the glycosyl hydrolase 3 family.

It localises to the secreted. The enzyme catalyses Hydrolysis of terminal, non-reducing beta-D-glucosyl residues with release of beta-D-glucose.. Its pathway is glycan metabolism; cellulose degradation. Beta-glucosidases are one of a number of cellulolytic enzymes involved in the degradation of cellulosic biomass. Catalyzes the last step releasing glucose from the inhibitory cellobiose. In Aspergillus fumigatus (strain ATCC MYA-4609 / CBS 101355 / FGSC A1100 / Af293) (Neosartorya fumigata), this protein is Probable beta-glucosidase L (bglL).